The chain runs to 85 residues: Translation initiation factor IF-1 1 (85 aa).

One can recognise an S1-like domain in the interval Met1–Leu72.

It belongs to the IF-1 family. Component of the 30S ribosomal translation pre-initiation complex which assembles on the 30S ribosome in the order IF-2 and IF-3, IF-1 and N-formylmethionyl-tRNA(fMet); mRNA recruitment can occur at any time during PIC assembly.

It localises to the cytoplasm. In terms of biological role, one of the essential components for the initiation of protein synthesis. Stabilizes the binding of IF-2 and IF-3 on the 30S subunit to which N-formylmethionyl-tRNA(fMet) subsequently binds. Helps modulate mRNA selection, yielding the 30S pre-initiation complex (PIC). Upon addition of the 50S ribosomal subunit IF-1, IF-2 and IF-3 are released leaving the mature 70S translation initiation complex. This Aromatoleum aromaticum (strain DSM 19018 / LMG 30748 / EbN1) (Azoarcus sp. (strain EbN1)) protein is Translation initiation factor IF-1 1.